A 134-amino-acid chain; its full sequence is ATP synthase epsilon chain (134 aa).

Belongs to the ATPase epsilon chain family. As to quaternary structure, F-type ATPases have 2 components, CF(1) - the catalytic core - and CF(0) - the membrane proton channel. CF(1) has five subunits: alpha(3), beta(3), gamma(1), delta(1), epsilon(1). CF(0) has three main subunits: a, b and c.

The protein resides in the cell inner membrane. Produces ATP from ADP in the presence of a proton gradient across the membrane. This Rhodospirillum rubrum (strain ATCC 11170 / ATH 1.1.1 / DSM 467 / LMG 4362 / NCIMB 8255 / S1) protein is ATP synthase epsilon chain.